Reading from the N-terminus, the 291-residue chain is Elongation factor Ts (291 aa).

The segment at threonine 79–valine 82 is involved in Mg(2+) ion dislocation from EF-Tu.

It belongs to the EF-Ts family.

It is found in the cytoplasm. Functionally, associates with the EF-Tu.GDP complex and induces the exchange of GDP to GTP. It remains bound to the aminoacyl-tRNA.EF-Tu.GTP complex up to the GTP hydrolysis stage on the ribosome. This is Elongation factor Ts from Roseobacter denitrificans (strain ATCC 33942 / OCh 114) (Erythrobacter sp. (strain OCh 114)).